We begin with the raw amino-acid sequence, 278 residues long: Large ribosomal subunit protein uL2 (278 aa).

The interval 223 to 278 (RGSAMNPNDHPHGGGEGKAPVGRKAPMTPWGKKALGVKTRNKKKASTKLIVRRRTK) is disordered. Basic residues predominate over residues 261–278 (TRNKKKASTKLIVRRRTK).

It belongs to the universal ribosomal protein uL2 family. Part of the 50S ribosomal subunit. Forms a bridge to the 30S subunit in the 70S ribosome.

Functionally, one of the primary rRNA binding proteins. Required for association of the 30S and 50S subunits to form the 70S ribosome, for tRNA binding and peptide bond formation. It has been suggested to have peptidyltransferase activity; this is somewhat controversial. Makes several contacts with the 16S rRNA in the 70S ribosome. This Spiroplasma kunkelii protein is Large ribosomal subunit protein uL2.